The primary structure comprises 444 residues: Jacalin-related lectin 42 (444 aa).

The residue at position 2 (Ala2) is an N-acetylalanine. Jacalin-type lectin domains are found at residues Ala2–Arg143, Ala146–Pro289, and Thr297–Pro441.

Belongs to the jacalin lectin family.

This chain is Jacalin-related lectin 42 (JAL42), found in Arabidopsis thaliana (Mouse-ear cress).